Consider the following 819-residue polypeptide: DNA topoisomerase 4 subunit A (819 aa).

Residues 30 to 496 (LPDIRDGLKP…QIIEIDTASL (467 aa)) enclose the Topo IIA-type catalytic domain. The active-site O-(5'-phospho-DNA)-tyrosine intermediate is the Tyr-118.

Belongs to the type II topoisomerase GyrA/ParC subunit family. ParC type 2 subfamily. In terms of assembly, heterotetramer composed of ParC and ParE.

It localises to the cell membrane. The catalysed reaction is ATP-dependent breakage, passage and rejoining of double-stranded DNA.. Functionally, topoisomerase IV is essential for chromosome segregation. It relaxes supercoiled DNA. Performs the decatenation events required during the replication of a circular DNA molecule. The protein is DNA topoisomerase 4 subunit A of Streptococcus pyogenes serotype M6 (strain ATCC BAA-946 / MGAS10394).